The following is a 446-amino-acid chain: Argininosuccinate synthase (446 aa).

ATP contacts are provided by residues Ala17–Ser25 and Ala43. Tyr99 serves as a coordination point for L-citrulline. Gly129 and Thr131 together coordinate ATP. Positions 131, 135, and 136 each coordinate L-aspartate. Asn135 contacts L-citrulline. Asp136 contributes to the ATP binding site. Residues Arg139 and Ser192 each contribute to the L-citrulline site. Asp194 lines the ATP pocket. Residues Thr201, Glu203, and Glu280 each contribute to the L-citrulline site.

Belongs to the argininosuccinate synthase family. Type 2 subfamily. Homotetramer.

The protein localises to the cytoplasm. It carries out the reaction L-citrulline + L-aspartate + ATP = 2-(N(omega)-L-arginino)succinate + AMP + diphosphate + H(+). Its pathway is amino-acid biosynthesis; L-arginine biosynthesis; L-arginine from L-ornithine and carbamoyl phosphate: step 2/3. This chain is Argininosuccinate synthase, found in Burkholderia mallei (strain NCTC 10247).